We begin with the raw amino-acid sequence, 361 residues long: C3a anaphylatoxin chemotactic receptor (361 aa).

Residues 1 to 64 (MQQETQAPPL…FASSEVRVIS (64 aa)) are Extracellular-facing. N-linked (GlcNAc...) asparagine glycosylation is found at Asn-36 and Asn-50. A helical membrane pass occupies residues 65–85 (LVVYCLTFLLGVPGNSFVIFI). Over 86 to 96 (AGMKMKRTVNT) the chain is Cytoplasmic. A helical transmembrane segment spans residues 97-117 (IWFLNLATADLLCCLSVPLTV). Over 118-134 (AEILLDHHWPYGYAMCK) the chain is Extracellular. The cysteines at positions 133 and 210 are disulfide-linked. A helical transmembrane segment spans residues 135–155 (ILPSVIVISMFASVFTLNIIS). The Cytoplasmic segment spans residues 156–177 (LDRFTQVITPVWAQNHRSLLLA). The helical transmembrane segment at 178–198 (RLSCVAVWILALLLSLPFMIL) threads the bilayer. Residues 199 to 224 (RRTYEEFNMTVCTFDDDDFTTYGALS) lie on the Extracellular side of the membrane. The chain crosses the membrane as a helical span at residues 225–245 (IVRFVFGFLIPLMSIVTCYGI). Over 246–262 (IARKLGSRHFRSGRAFR) the chain is Cytoplasmic. The helical transmembrane segment at 263 to 283 (IMLAVIVAFFLCWMPYHVLDL) threads the bilayer. The Extracellular segment spans residues 284–301 (IRSYGGESSSMVALKVDP). A helical transmembrane segment spans residues 302-322 (LAISLAYVNSCLNPVLYVFMG). At 323–361 (QDFKNKVQLSLRRVFERAFSEEGTQISRSTQSQQVHSVL) the chain is on the cytoplasmic side.

It belongs to the G-protein coupled receptor 1 family.

The protein resides in the cell membrane. Receptor for the chemotactic and inflammatory peptide anaphylatoxin C3a. This receptor stimulates chemotaxis, granule enzyme release and superoxide anion production. The polypeptide is C3a anaphylatoxin chemotactic receptor (c3ar1) (Danio rerio (Zebrafish)).